The chain runs to 315 residues: Thioredoxin reductase (315 aa).

34–41 provides a ligand contact to FAD; the sequence is EGMKVGGQ. C134 and C137 are oxidised to a cystine. Residue 282 to 291 coordinates FAD; sequence DIRVKSLRQV.

The protein belongs to the class-II pyridine nucleotide-disulfide oxidoreductase family. Homodimer. It depends on FAD as a cofactor.

Its subcellular location is the cytoplasm. It carries out the reaction [thioredoxin]-dithiol + NADP(+) = [thioredoxin]-disulfide + NADPH + H(+). This chain is Thioredoxin reductase (trxB), found in Peptoclostridium litorale (Clostridium litorale).